The following is a 117-amino-acid chain: Galanin peptides (117 aa).

The signal sequence occupies residues 1–19 (MQRCAGFLFLSLILCAALS). Positions 20–30 (ETFGLVLSAKE) are excised as a propeptide. Thr-61 is modified (threonine amide).

Belongs to the galanin family.

It is found in the secreted. Endocrine hormone of the central and peripheral nervous systems that binds and activates the G protein-coupled receptors GALR1, GALR2, and GALR3. This small neuropeptide may regulate diverse physiologic functions including contraction of smooth muscle of the gastrointestinal and genitourinary tract, growth hormone and insulin release and adrenal secretion. In Coturnix japonica (Japanese quail), this protein is Galanin peptides (GAL).